The primary structure comprises 51 residues: Gene 18 protein (51 aa).

A disordered region spans residues 24–51 (AAGGWKRPRKPRTTKPKPAPKQEPATEE). Basic residues predominate over residues 29–38 (KRPRKPRTTK).

In Mycobacterium phage D29 (Mycobacteriophage D29), this protein is Gene 18 protein (18).